Reading from the N-terminus, the 252-residue chain is 4-hydroxy-tetrahydrodipicolinate reductase (252 aa).

NAD(+)-binding positions include 8–13 (GCSGKM), 85–87 (CTT), and 109–112 (SANM). The Proton donor/acceptor role is filled by His-142. His-143 is a binding site for (S)-2,3,4,5-tetrahydrodipicolinate. The active-site Proton donor is the Lys-146. Position 152-153 (152-153 (GT)) interacts with (S)-2,3,4,5-tetrahydrodipicolinate.

It belongs to the DapB family.

The protein resides in the cytoplasm. The enzyme catalyses (S)-2,3,4,5-tetrahydrodipicolinate + NAD(+) + H2O = (2S,4S)-4-hydroxy-2,3,4,5-tetrahydrodipicolinate + NADH + H(+). It catalyses the reaction (S)-2,3,4,5-tetrahydrodipicolinate + NADP(+) + H2O = (2S,4S)-4-hydroxy-2,3,4,5-tetrahydrodipicolinate + NADPH + H(+). Its pathway is amino-acid biosynthesis; L-lysine biosynthesis via DAP pathway; (S)-tetrahydrodipicolinate from L-aspartate: step 4/4. In terms of biological role, catalyzes the conversion of 4-hydroxy-tetrahydrodipicolinate (HTPA) to tetrahydrodipicolinate. The protein is 4-hydroxy-tetrahydrodipicolinate reductase of Clostridium novyi (strain NT).